Reading from the N-terminus, the 159-residue chain is 3-hydroxyacyl-[acyl-carrier-protein] dehydratase FabZ (159 aa).

Residue His-59 is part of the active site.

It belongs to the thioester dehydratase family. FabZ subfamily.

The protein localises to the cytoplasm. The enzyme catalyses a (3R)-hydroxyacyl-[ACP] = a (2E)-enoyl-[ACP] + H2O. Involved in unsaturated fatty acids biosynthesis. Catalyzes the dehydration of short chain beta-hydroxyacyl-ACPs and long chain saturated and unsaturated beta-hydroxyacyl-ACPs. The polypeptide is 3-hydroxyacyl-[acyl-carrier-protein] dehydratase FabZ (Caulobacter vibrioides (strain ATCC 19089 / CIP 103742 / CB 15) (Caulobacter crescentus)).